The following is a 172-amino-acid chain: Signal peptidase complex catalytic subunit SEC11 (172 aa).

Topologically, residues 1–14 (MLSSLANPRQAASQ) are cytoplasmic. A helical; Signal-anchor for type II membrane protein transmembrane segment spans residues 15 to 35 (LLNFALILSTAFMMWKGLSVV). Residues 36–172 (SDSPSPIVVV…MGLVVVLQRE (137 aa)) are Lumenal-facing. Catalysis depends on charge relay system residues Ser49, His90, and Asp115. Residues 158 to 169 (AMLGIMGLVVVL) form a C-terminal short (CTS) helix region.

It belongs to the peptidase S26B family. As to quaternary structure, component of the signal peptidase complex (SPC) composed of a catalytic subunit SEC11 and three accessory subunits SPC1, SPC2 and SPC3. The complex induces a local thinning of the ER membrane which is used to measure the length of the signal peptide (SP) h-region of protein substrates. This ensures the selectivity of the complex towards h-regions shorter than 18-20 amino acids. SPC associates with the translocon complex.

Its subcellular location is the endoplasmic reticulum membrane. It catalyses the reaction Cleavage of hydrophobic, N-terminal signal or leader sequences from secreted and periplasmic proteins.. In terms of biological role, catalytic component of the signal peptidase complex (SPC) which catalyzes the cleavage of N-terminal signal sequences from nascent proteins as they are translocated into the lumen of the endoplasmic reticulum. Specifically cleaves N-terminal signal peptides that contain a hydrophobic alpha-helix (h-region) shorter than 18-20 amino acids. The sequence is that of Signal peptidase complex catalytic subunit SEC11 (SEC11) from Colletotrichum graminicola (strain M1.001 / M2 / FGSC 10212) (Maize anthracnose fungus).